The chain runs to 686 residues: Homoaconitase, mitochondrial (686 aa).

The transit peptide at 1-17 directs the protein to the mitochondrion; it reads MRVVRCVRRFSASRAVS. Positions 337, 401, and 404 each coordinate [4Fe-4S] cluster.

The protein belongs to the aconitase/IPM isomerase family. The cofactor is [4Fe-4S] cluster.

It localises to the mitochondrion. The enzyme catalyses (2R,3S)-homoisocitrate = cis-homoaconitate + H2O. It functions in the pathway amino-acid biosynthesis; L-lysine biosynthesis via AAA pathway; L-alpha-aminoadipate from 2-oxoglutarate: step 3/5. Catalyzes the reversible hydration of cis-homoaconitate to (2R,3S)-homoisocitrate, a step in the alpha-aminoadipate pathway for lysine biosynthesis. In Eremothecium gossypii (strain ATCC 10895 / CBS 109.51 / FGSC 9923 / NRRL Y-1056) (Yeast), this protein is Homoaconitase, mitochondrial (LYS4).